Reading from the N-terminus, the 557-residue chain is Jerky protein (557 aa).

Residues 11 to 62 form the HTH psq-type domain; sequence KGEKRKRVVLTLKEKIDICTRLERGESRKALMQEYNVGMSTLYDIKAHKAQL. 2 DNA-binding regions (H-T-H motif) span residues 38 to 58 and 110 to 142; these read RKAL…IKAH and PMLI…FKAR. The region spanning 77–149 is the HTH CENPB-type domain; it reads QRRTLHTPKL…KARHGIKKLD (73 aa). Residues 213 to 382 form the DDE-1 domain; that stretch reads KDRLTVLMCA…VPSQVFQRAW (170 aa).

It belongs to the tigger transposable element derived protein family. As to expression, brain; highest in the temporal and brainstem regions.

It is found in the nucleus. Its function is as follows. May bind DNA. The polypeptide is Jerky protein (Mus musculus (Mouse)).